The sequence spans 213 residues: ATP-dependent Clp protease proteolytic subunit (213 aa).

S114 (nucleophile) is an active-site residue. H139 is a catalytic residue.

The protein belongs to the peptidase S14 family. Fourteen ClpP subunits assemble into 2 heptameric rings which stack back to back to give a disk-like structure with a central cavity, resembling the structure of eukaryotic proteasomes.

It is found in the cytoplasm. It carries out the reaction Hydrolysis of proteins to small peptides in the presence of ATP and magnesium. alpha-casein is the usual test substrate. In the absence of ATP, only oligopeptides shorter than five residues are hydrolyzed (such as succinyl-Leu-Tyr-|-NHMec, and Leu-Tyr-Leu-|-Tyr-Trp, in which cleavage of the -Tyr-|-Leu- and -Tyr-|-Trp bonds also occurs).. Cleaves peptides in various proteins in a process that requires ATP hydrolysis. Has a chymotrypsin-like activity. Plays a major role in the degradation of misfolded proteins. The protein is ATP-dependent Clp protease proteolytic subunit of Pseudomonas entomophila (strain L48).